A 930-amino-acid chain; its full sequence is Isoleucine--tRNA ligase (930 aa).

Residues 57 to 67 carry the 'HIGH' region motif; it reads PYANGHIHLGT. An L-isoleucyl-5'-AMP-binding site is contributed by E559. The 'KMSKS' region motif lies at 600–604; it reads KMSKS. Residue K603 coordinates ATP. Zn(2+) is bound by residues C899, C902, C918, and C921.

The protein belongs to the class-I aminoacyl-tRNA synthetase family. IleS type 1 subfamily. In terms of assembly, monomer. It depends on Zn(2+) as a cofactor.

Its subcellular location is the cytoplasm. The catalysed reaction is tRNA(Ile) + L-isoleucine + ATP = L-isoleucyl-tRNA(Ile) + AMP + diphosphate. Its function is as follows. Catalyzes the attachment of isoleucine to tRNA(Ile). As IleRS can inadvertently accommodate and process structurally similar amino acids such as valine, to avoid such errors it has two additional distinct tRNA(Ile)-dependent editing activities. One activity is designated as 'pretransfer' editing and involves the hydrolysis of activated Val-AMP. The other activity is designated 'posttransfer' editing and involves deacylation of mischarged Val-tRNA(Ile). In Desulforudis audaxviator (strain MP104C), this protein is Isoleucine--tRNA ligase.